A 290-amino-acid chain; its full sequence is Probable prolyl 4-hydroxylase 8 (290 aa).

Residues 1-19 lie on the Cytoplasmic side of the membrane; it reads MAKKPKQLRNKPRKSFSTQ. The chain crosses the membrane as a helical; Signal-anchor for type II membrane protein span at residues 20 to 40; the sequence is TFTVVVLVLFVILILVGLGIF. Residues 41 to 290 lie on the Lumenal side of the membrane; sequence SLPSTNKTSS…TKWFHVHEYN (250 aa). N-linked (GlcNAc...) asparagine glycosylation is present at asparagine 46. The Fe2OG dioxygenase domain maps to 163-286; the sequence is NGEGLQVLHY…KWSSTKWFHV (124 aa). Residues histidine 181 and aspartate 183 each coordinate Fe cation. Residue asparagine 222 is glycosylated (N-linked (GlcNAc...) asparagine). Histidine 267 is a Fe cation binding site. Residue lysine 277 participates in 2-oxoglutarate binding.

This sequence belongs to the P4HA family. The cofactor is Fe(2+). L-ascorbate is required as a cofactor.

The protein resides in the endoplasmic reticulum membrane. It carries out the reaction L-prolyl-[collagen] + 2-oxoglutarate + O2 = trans-4-hydroxy-L-prolyl-[collagen] + succinate + CO2. In terms of biological role, catalyzes the post-translational formation of 4-hydroxyproline in -Xaa-Pro-Gly- sequences in proline-rich peptide sequences of plant glycoproteins and other proteins. Hydroxyprolines are important constituent of many plant cell wall glycoproteins such as extensins, hydroxyproline-rich glycoproteins, lectins and arabinogalactan proteins. In Arabidopsis thaliana (Mouse-ear cress), this protein is Probable prolyl 4-hydroxylase 8.